A 518-amino-acid polypeptide reads, in one-letter code: Arrestin-related trafficking adapter 10 (518 aa).

K118 participates in a covalent cross-link: Glycyl lysine isopeptide (Lys-Gly) (interchain with G-Cter in ubiquitin).

Belongs to the ART10 family. As to quaternary structure, interacts with RSP5. Ubiquitinated by RSP5.

The protein resides in the cytoplasm. Its function is as follows. May regulate endocytosis by recruiting RSP5 ubiquitin ligase activity to specific plasma membrane proteins in response to extracellular stimuli. This chain is Arrestin-related trafficking adapter 10 (ART10), found in Saccharomyces cerevisiae (strain ATCC 204508 / S288c) (Baker's yeast).